A 361-amino-acid polypeptide reads, in one-letter code: Chorismate synthase (361 aa).

The NADP(+) site is built by Arg48 and Arg54. FMN-binding positions include 125–127 (RSS), 238–239 (NA), Gly278, 293–297 (KPTSS), and Arg319.

It belongs to the chorismate synthase family. In terms of assembly, homotetramer. It depends on FMNH2 as a cofactor.

The catalysed reaction is 5-O-(1-carboxyvinyl)-3-phosphoshikimate = chorismate + phosphate. It functions in the pathway metabolic intermediate biosynthesis; chorismate biosynthesis; chorismate from D-erythrose 4-phosphate and phosphoenolpyruvate: step 7/7. Functionally, catalyzes the anti-1,4-elimination of the C-3 phosphate and the C-6 proR hydrogen from 5-enolpyruvylshikimate-3-phosphate (EPSP) to yield chorismate, which is the branch point compound that serves as the starting substrate for the three terminal pathways of aromatic amino acid biosynthesis. This reaction introduces a second double bond into the aromatic ring system. This is Chorismate synthase from Salmonella choleraesuis (strain SC-B67).